The primary structure comprises 132 residues: Cytidine deaminase (132 aa).

The region spanning 1 to 128 (MDRQMLIKEA…ELLPGAFTAE (128 aa)) is the CMP/dCMP-type deaminase domain. 42–44 (NIE) is a binding site for substrate. C53 provides a ligand contact to Zn(2+). Residue E55 is the Proton donor of the active site. C86 and C89 together coordinate Zn(2+).

The protein belongs to the cytidine and deoxycytidylate deaminase family. The cofactor is Zn(2+).

It carries out the reaction cytidine + H2O + H(+) = uridine + NH4(+). The catalysed reaction is 2'-deoxycytidine + H2O + H(+) = 2'-deoxyuridine + NH4(+). Functionally, this enzyme scavenges exogenous and endogenous cytidine and 2'-deoxycytidine for UMP synthesis. This Halalkalibacterium halodurans (strain ATCC BAA-125 / DSM 18197 / FERM 7344 / JCM 9153 / C-125) (Bacillus halodurans) protein is Cytidine deaminase (cdd).